Reading from the N-terminus, the 284-residue chain is Anaerobic dimethyl sulfoxide reductase chain YnfH (284 aa).

Over 1–9 the chain is Periplasmic; it reads MGNGWHEWP. Residues 10 to 30 form a helical membrane-spanning segment; the sequence is LVIFTVLGQCVVGALIVSGIG. At 31 to 45 the chain is on the cytoplasmic side; it reads WFAAKNDADRQRIVR. Residues 46–66 form a helical membrane-spanning segment; that stretch reads GMFFLWLLMGVGFIASVMHLG. The Periplasmic segment spans residues 67–86; it reads SPLRAFNSLNRIGASGLSNE. Residues 87-107 form a helical membrane-spanning segment; it reads IAAGSIFFAVGGLWWLVAVIG. At 108–115 the chain is on the cytoplasmic side; that stretch reads KMPQALGK. Residues 116-136 form a helical membrane-spanning segment; that stretch reads LWLLFSMALGVIFVWMMTCVY. Topologically, residues 137-148 are periplasmic; the sequence is QIDTVPTWHNGY. Residues 149-169 traverse the membrane as a helical segment; the sequence is TTLAFFLTVLLSGPILAAAIL. Residues 170 to 180 are Cytoplasmic-facing; the sequence is RAARVTFNTTP. The helical transmembrane segment at 181–201 threads the bilayer; that stretch reads FAIISVLALIACAGVIVLQGL. Residues 202-222 are Periplasmic-facing; sequence SLASIHSSVQQASALVPDYAS. A helical membrane pass occupies residues 223–243; the sequence is LQVWRVVLLCAGLGCWLCPLI. Residues 244–250 are Cytoplasmic-facing; sequence RRREPHV. A helical transmembrane segment spans residues 251 to 271; sequence AGLILGLILILGGEMIGRVLF. At 272 to 284 the chain is on the periplasmic side; the sequence is YGLHMTVGMAIAG.

Belongs to the DmsC family. In terms of assembly, the complex consists of three subunits: YnfF, the reductase; YnfG, an electron transfer protein, and YnfH, a membrane anchor protein.

The protein localises to the cell inner membrane. Functionally, terminal reductase during anaerobic growth on various sulfoxide and N-oxide compounds. The C subunit anchors the other two subunits to the membrane and stabilize the catalytic subunits. This chain is Anaerobic dimethyl sulfoxide reductase chain YnfH (ynfH), found in Escherichia coli (strain K12).